The following is an 89-amino-acid chain: uncharacterized protein (89 aa).

The 89-residue stretch at 1–89 (MEKYEKAAEI…KEIIKLVDEL (89 aa)) folds into the HTH arsR-type domain.

This is an uncharacterized protein from Methanocaldococcus jannaschii (strain ATCC 43067 / DSM 2661 / JAL-1 / JCM 10045 / NBRC 100440) (Methanococcus jannaschii).